The chain runs to 442 residues: uncharacterized protein (442 aa).

7 consecutive transmembrane segments (helical) span residues 209–229 (FNIWTHLSAFIVFFAVLAYFY), 247–267 (IFFLLSAMKCLGCSVIWHTFS), 284–304 (VGISALIAASIISVEYHAFVC), 308–328 (LRFIFIAFTGTLGLIGIYTPW), 342–362 (IFFFVGLACSGLIPMITMFYI), 374–394 (PVFKSIFSYIIGVLFYGLHIP), and 402–422 (FDIIGNSHQIWHIAIIVGVAF).

It is found in the membrane. This is an uncharacterized protein from Schizosaccharomyces pombe (strain 972 / ATCC 24843) (Fission yeast).